Consider the following 243-residue polypeptide: CAVP-target protein (243 aa).

The tract at residues 1 to 22 (PKPPAEAKPAAKPAAPPAAANP) is disordered. Over residues 7–20 (AKPAAKPAAPPAAA) the composition is skewed to low complexity. One can recognise an IQ domain in the interval 35–62 (SAATRIQASFRMHKNRMALKEKSIPKFS). Ig-like C2-type domains lie at 59–150 (PKFS…LALE) and 151–243 (VPAK…VKVN).

Its function is as follows. This protein is the target of CAVP, which binds to it in a calcium-dependent manner. The chain is CAVP-target protein from Branchiostoma lanceolatum (Common lancelet).